Here is a 211-residue protein sequence, read N- to C-terminus: Calaxin (211 aa).

EF-hand domains lie at 64 to 99, 100 to 135, and 145 to 180; these read TDDM…FLRG, SLEE…SLLK, and GIKD…ETLL. The Ca(2+) site is built by Asp-77, Asp-79, Asp-81, Cys-83, Glu-88, Asp-113, Asn-115, Asp-117, Glu-124, Asp-158, Asp-160, Asp-162, Lys-164, and Asp-169.

As to quaternary structure, component of the outer dynein arm-docking complex along with ODAD1, ODAD2, ODAD3 and ODAD4. As to expression, strong expression in the respiratory epithelium. Expressed in the sperm.

It localises to the cytoplasm. The protein localises to the cytoskeleton. The protein resides in the cilium axoneme. It is found in the cell projection. Its subcellular location is the cilium. It localises to the flagellum. In terms of biological role, component of the outer dynein arm-docking complex (ODA-DC) that mediates outer dynein arms (ODA) binding onto the doublet microtubule. Seems to regulate the assembly of both ODAs and their axonemal docking complex onto ciliary microtubules. Regulates ciliary and flagellar motility and is required for cilia-driven determination of body laterality. The protein is Calaxin of Homo sapiens (Human).